An 879-amino-acid chain; its full sequence is Alanine--tRNA ligase (879 aa).

Zn(2+) contacts are provided by His566, His570, Cys668, and His672.

It belongs to the class-II aminoacyl-tRNA synthetase family. Zn(2+) is required as a cofactor.

It localises to the cytoplasm. It catalyses the reaction tRNA(Ala) + L-alanine + ATP = L-alanyl-tRNA(Ala) + AMP + diphosphate. Catalyzes the attachment of alanine to tRNA(Ala) in a two-step reaction: alanine is first activated by ATP to form Ala-AMP and then transferred to the acceptor end of tRNA(Ala). Also edits incorrectly charged Ser-tRNA(Ala) and Gly-tRNA(Ala) via its editing domain. The polypeptide is Alanine--tRNA ligase (Clostridium novyi (strain NT)).